Consider the following 355-residue polypeptide: Tryptophan--tRNA ligase (355 aa).

Residues 13 to 15 (QPT) and 21 to 22 (GN) each bind ATP. The 'HIGH' region signature appears at 14-22 (PTGNLHLGN). L-tryptophan is bound at residue D137. ATP-binding positions include 149-151 (GED), I208, and 217-221 (KMSKS). The 'KMSKS' region motif lies at 217–221 (KMSKS).

This sequence belongs to the class-I aminoacyl-tRNA synthetase family. In terms of assembly, homodimer.

The protein resides in the cytoplasm. The catalysed reaction is tRNA(Trp) + L-tryptophan + ATP = L-tryptophyl-tRNA(Trp) + AMP + diphosphate + H(+). In terms of biological role, catalyzes the attachment of tryptophan to tRNA(Trp). In Brucella melitensis biotype 1 (strain ATCC 23456 / CCUG 17765 / NCTC 10094 / 16M), this protein is Tryptophan--tRNA ligase.